Here is a 231-residue protein sequence, read N- to C-terminus: NADH-ubiquinone oxidoreductase chain 4 (231 aa).

The next 7 helical transmembrane spans lie at 1-21 (PIAG…YGMI), 34-54 (MFIP…LTCL), 62-82 (LIAY…SIQT), 86-106 (LSGA…LFCL), 118-138 (ILIL…WWLL), 169-189 (TIIL…HIFL), and 211-231 (LLMT…ELVM).

Belongs to the complex I subunit 4 family.

It localises to the mitochondrion membrane. The enzyme catalyses a ubiquinone + NADH + 5 H(+)(in) = a ubiquinol + NAD(+) + 4 H(+)(out). Functionally, core subunit of the mitochondrial membrane respiratory chain NADH dehydrogenase (Complex I) that is believed to belong to the minimal assembly required for catalysis. Complex I functions in the transfer of electrons from NADH to the respiratory chain. The immediate electron acceptor for the enzyme is believed to be ubiquinone. This chain is NADH-ubiquinone oxidoreductase chain 4 (MT-ND4), found in Causus rhombeatus (Rhombic night adder).